We begin with the raw amino-acid sequence, 350 residues long: Glycogenin-1 (350 aa).

Threonine 2 carries the post-translational modification N-acetylthreonine. The UDP site is built by leucine 9, threonine 11, asparagine 12, and tyrosine 15. UDP-alpha-D-glucose contacts are provided by leucine 9, threonine 11, asparagine 12, and tyrosine 15. Serine 44 carries the post-translational modification Phosphoserine. UDP is bound at residue arginine 77. UDP-alpha-D-glucose contacts are provided by arginine 77, lysine 86, aspartate 102, alanine 103, aspartate 104, asparagine 133, serine 134, aspartate 160, aspartate 163, and glutamine 164. Aspartate 102, alanine 103, and aspartate 104 together coordinate UDP. Aspartate 102 serves as a coordination point for Mn(2+). Position 104 (aspartate 104) interacts with Mn(2+). Tyrosine 195 carries an O-linked (Glc...) tyrosine glycan. Positions 212, 215, and 218 each coordinate UDP. Histidine 212 provides a ligand contact to Mn(2+). Residues glycine 215 and lysine 218 each contribute to the UDP-alpha-D-glucose site. The segment at 301 to 333 is interaction with GYS1; sequence SHLSLGEIPAMAQPFVSSEERKERWEQGQADYM.

Belongs to the glycosyltransferase 8 family. Glycogenin subfamily. In terms of assembly, part of the GYS1-GYG1 complex, a heterooctamer composed of a tetramer of GYS1 and 2 dimers of GYG1, where each GYS1 protomer binds to one GYG1 subunit (via GYG1 C-terminus); the GYS1 tetramer may dissociate from GYG1 dimers to continue glycogen polymerization on its own. May also form a heterooctamer complex with GYS2 (via GYG1 C-terminus). It depends on Mn(2+) as a cofactor. In terms of processing, self-glycosylated by the transfer of glucose residues from UDP-glucose to itself, forming an alpha-1,4-glycan of around 10 residues attached to Tyr-195. Phosphorylated. In terms of tissue distribution, highly expressed in skeletal muscle and heart, with lower levels in brain, lung, kidney and pancreas.

Its subcellular location is the cytoplasm. The protein localises to the nucleus. It carries out the reaction L-tyrosyl-[glycogenin] + UDP-alpha-D-glucose = alpha-D-glucosyl-L-tyrosyl-[glycogenin] + UDP + H(+). It catalyses the reaction [1,4-alpha-D-glucosyl](n)-L-tyrosyl-[glycogenin] + UDP-alpha-D-glucose = [1,4-alpha-D-glucosyl](n+1)-L-tyrosyl-[glycogenin] + UDP + H(+). The protein operates within glycan biosynthesis; glycogen biosynthesis. With respect to regulation, inhibited by palladium ions. Functionally, glycogenin participates in the glycogen biosynthetic process along with glycogen synthase and glycogen branching enzyme. It catalyzes the formation of a short alpha (1,4)-glucosyl chain covalently attached via a glucose 1-O-tyrosyl linkage to internal tyrosine residues and these chains act as primers for the elongation reaction catalyzed by glycogen synthase. The sequence is that of Glycogenin-1 from Homo sapiens (Human).